Reading from the N-terminus, the 122-residue chain is Large ribosomal subunit protein uL14 (122 aa).

The protein belongs to the universal ribosomal protein uL14 family. In terms of assembly, part of the 50S ribosomal subunit. Forms a cluster with proteins L3 and L19. In the 70S ribosome, L14 and L19 interact and together make contacts with the 16S rRNA in bridges B5 and B8.

Binds to 23S rRNA. Forms part of two intersubunit bridges in the 70S ribosome. The sequence is that of Large ribosomal subunit protein uL14 from Nitrosococcus oceani (strain ATCC 19707 / BCRC 17464 / JCM 30415 / NCIMB 11848 / C-107).